A 475-amino-acid chain; its full sequence is Putative poly(A) polymerase catalytic subunit (475 aa).

This sequence belongs to the poxviridae poly(A) polymerase catalytic subunit family. Highly divergent.

It localises to the virion. It catalyses the reaction RNA(n) + ATP = RNA(n)-3'-adenine ribonucleotide + diphosphate. Functionally, polymerase that creates the 3'-poly(A) tail of mRNA's. This Ornithodoros (relapsing fever ticks) protein is Putative poly(A) polymerase catalytic subunit.